We begin with the raw amino-acid sequence, 298 residues long: Dihydrodipicolinate reductase-like protein CRR1, chloroplastic (298 aa).

Residues 1 to 25 constitute a chloroplast transit peptide; it reads MAAVNCHFFQLSRHLKPSRPSFSCS. Position 160–163 (160–163) interacts with NAD(+); the sequence is APTL.

Belongs to the DapB family. As to expression, expressed specifically in leaves.

It localises to the plastid. The protein localises to the chloroplast stroma. Functionally, dihydrodipicolinate reductase (DHPR)-like protein that may not function as DHPR in lysine biosynthesis. Required for both formation and activity of the chloroplast NAD(P)H dehydrogenase (NDH) complex of the photosynthetic electron transport chain. May function in assembly or stabilization of the NDH complex. In Arabidopsis thaliana (Mouse-ear cress), this protein is Dihydrodipicolinate reductase-like protein CRR1, chloroplastic.